A 149-amino-acid chain; its full sequence is Transcription antitermination protein NusB (149 aa).

This sequence belongs to the NusB family.

In terms of biological role, involved in transcription antitermination. Required for transcription of ribosomal RNA (rRNA) genes. Binds specifically to the boxA antiterminator sequence of the ribosomal RNA (rrn) operons. In Caulobacter vibrioides (strain ATCC 19089 / CIP 103742 / CB 15) (Caulobacter crescentus), this protein is Transcription antitermination protein NusB.